The following is a 236-amino-acid chain: C-&gt;U-editing enzyme APOBEC-1 (236 aa).

The CMP/dCMP-type deaminase domain occupies 10–134 (KDYTLRRRIE…RRNRQGLKDL (125 aa)). Zn(2+) is bound at residue histidine 61. Residue glutamate 63 is the Proton donor of the active site. Positions 93 and 96 each coordinate Zn(2+).

This sequence belongs to the cytidine and deoxycytidylate deaminase family. In terms of assembly, homodimer. Interacts with A1CF; form an mRNA editing complex. Interacts with RBM47; form an mRNA editing complex. Found in a complex with CELF2/CUGBP2 and A1CF. Interacts with HNRPAB. Interacts with SYNCRIP. The cofactor is Zn(2+). In terms of tissue distribution, expressed exclusively in the intestine.

It is found in the cytoplasm. Its subcellular location is the nucleus. It carries out the reaction a cytidine in mRNA + H2O + H(+) = a uridine in mRNA + NH4(+). The catalysed reaction is cytidine(6666) in apoB mRNA + H2O + H(+) = uridine(6666) in apoB mRNA + NH4(+). In terms of biological role, cytidine deaminase catalyzing the cytidine to uridine postranscriptional editing of a variety of mRNAs. Form complexes with cofactors that confer differential editing activity and selectivity. Responsible for the postranscriptional editing of a CAA codon for Gln to a UAA codon for stop in the apolipoprotein B mRNA. Also involved in CGA (Arg) to UGA (Stop) editing in the NF1 mRNA. May also play a role in the epigenetic regulation of gene expression by participating in DNA demethylation. The chain is C-&gt;U-editing enzyme APOBEC-1 from Oryctolagus cuniculus (Rabbit).